The primary structure comprises 209 residues: Kynurenine formamidase (209 aa).

W20 lines the substrate pocket. Positions 50, 54, and 56 each coordinate Zn(2+). The Proton donor/acceptor role is filled by H60. Residues H161 and E173 each contribute to the Zn(2+) site.

This sequence belongs to the Cyclase 1 superfamily. KynB family. As to quaternary structure, homodimer. It depends on Zn(2+) as a cofactor.

The catalysed reaction is N-formyl-L-kynurenine + H2O = L-kynurenine + formate + H(+). The protein operates within amino-acid degradation; L-tryptophan degradation via kynurenine pathway; L-kynurenine from L-tryptophan: step 2/2. Catalyzes the hydrolysis of N-formyl-L-kynurenine to L-kynurenine, the second step in the kynurenine pathway of tryptophan degradation. This is Kynurenine formamidase from Bacillus anthracis.